The following is a 507-amino-acid chain: Probable cytochrome P450 6a18 (507 aa).

Cysteine 451 is a heme binding site.

Belongs to the cytochrome P450 family. Heme serves as cofactor.

Its subcellular location is the endoplasmic reticulum membrane. It localises to the microsome membrane. May be involved in the metabolism of insect hormones and in the breakdown of synthetic insecticides. The chain is Probable cytochrome P450 6a18 (Cyp6a18) from Drosophila melanogaster (Fruit fly).